The primary structure comprises 376 residues: Succinate--CoA ligase [ADP-forming] subunit beta (376 aa).

In terms of domain architecture, ATP-grasp spans 9–234 (KAIAKKYGIP…ERELSELEKE (226 aa)). ATP is bound by residues Lys-45, 52-54 (GRG), Glu-91, Glu-94, and Glu-99. Mg(2+) contacts are provided by Asn-191 and Asp-204. Residues Asn-254 and 311–313 (GIT) each bind substrate.

The protein belongs to the succinate/malate CoA ligase beta subunit family. In terms of assembly, heterotetramer of two alpha and two beta subunits. Mg(2+) is required as a cofactor.

It carries out the reaction succinate + ATP + CoA = succinyl-CoA + ADP + phosphate. The catalysed reaction is GTP + succinate + CoA = succinyl-CoA + GDP + phosphate. The protein operates within carbohydrate metabolism; tricarboxylic acid cycle; succinate from succinyl-CoA (ligase route): step 1/1. In terms of biological role, succinyl-CoA synthetase functions in the citric acid cycle (TCA), coupling the hydrolysis of succinyl-CoA to the synthesis of either ATP or GTP and thus represents the only step of substrate-level phosphorylation in the TCA. The beta subunit provides nucleotide specificity of the enzyme and binds the substrate succinate, while the binding sites for coenzyme A and phosphate are found in the alpha subunit. This Ignicoccus hospitalis (strain KIN4/I / DSM 18386 / JCM 14125) protein is Succinate--CoA ligase [ADP-forming] subunit beta.